Consider the following 355-residue polypeptide: Peptide chain release factor 1 (355 aa).

Gln232 carries the N5-methylglutamine modification.

It belongs to the prokaryotic/mitochondrial release factor family. Methylated by PrmC. Methylation increases the termination efficiency of RF1.

Its subcellular location is the cytoplasm. In terms of biological role, peptide chain release factor 1 directs the termination of translation in response to the peptide chain termination codons UAG and UAA. The protein is Peptide chain release factor 1 of Kineococcus radiotolerans (strain ATCC BAA-149 / DSM 14245 / SRS30216).